The chain runs to 164 residues: Transcriptional repressor NrdR (164 aa).

Residues 3–34 (CPKCNYHKSSVVDSRQAEDGNTIRRRRECEQC) fold into a zinc finger. The ATP-cone domain maps to 49 to 139 (LLVIKKDGTR…VYKSFKDVDE (91 aa)).

Belongs to the NrdR family. Zn(2+) serves as cofactor.

Negatively regulates transcription of bacterial ribonucleotide reductase nrd genes and operons by binding to NrdR-boxes. The polypeptide is Transcriptional repressor NrdR (Streptococcus pyogenes serotype M6 (strain ATCC BAA-946 / MGAS10394)).